The following is a 678-amino-acid chain: Growth arrest-specific protein 6 (678 aa).

The first 30 residues, 1–30 (MAPSLSPGPAALRRAPQLLLLLLAAECALA), serve as a signal peptide directing secretion. In terms of domain architecture, Gla spans 53 to 94 (FEEAKQGHLERECVEELCSREEAREVFENDPETDYFYPRYLD). Cys-65 and Cys-70 form a disulfide bridge. Position 71 is a phosphoserine; by FAM20C (Ser-71). An EGF-like 1; calcium-binding domain is found at 116–154 (LPDQCTPNPCDRKGTQACQDLMGNFFCLCKAGWGGRLCD). Intrachain disulfides connect Cys-120–Cys-133, Cys-125–Cys-142, Cys-144–Cys-153, Cys-160–Cys-171, Cys-167–Cys-180, Cys-182–Cys-195, Cys-201–Cys-212, Cys-207–Cys-221, Cys-223–Cys-236, Cys-242–Cys-251, Cys-247–Cys-260, Cys-262–Cys-277, Cys-283–Cys-570, and Cys-444–Cys-470. The 41-residue stretch at 156-196 (DVNECSQENGGCLQICHNKPGSFHCSCHSGFELSSDGRTCQ) folds into the EGF-like 2; calcium-binding domain. The region spanning 197 to 237 (DIDECADSEACGEARCKNLPGSYSCLCDEGFAYSSQEKACR) is the EGF-like 3; calcium-binding domain. Positions 238-278 (DVDECLQGRCEQVCVNSPGSYTCHCDGRGGLKLSQDMDTCE) constitute an EGF-like 4; calcium-binding domain. Laminin G-like domains are found at residues 298-470 (GRMF…RMQC) and 477-670 (GSFY…AHSC). Ca(2+)-binding residues include Asp-329 and Glu-331. N-linked (GlcNAc...) asparagine glycosylation occurs at Asn-420. Residue Arg-440 participates in Ca(2+) binding. Residues Thr-621 and Thr-637 each carry the phosphothreonine modification. Tyr-640 carries the phosphotyrosine modification. A disulfide bridge connects residues Cys-643 and Cys-670. Asp-656 contacts Ca(2+).

In terms of assembly, heterodimer and heterotetramer with AXL. Proteolytically processed after secretion to yield a N-terminal 36 kDa protein and a C-terminal 50 kDa protein including the laminin G-like domains which activates AXL. In terms of processing, gamma-carboxyglutamate residues are formed by vitamin K dependent carboxylation. These residues are essential for the binding of calcium. In terms of tissue distribution, plasma. Isoform 1 and isoform 2 are widely expressed, isoform 1 being expressed at higher levels than isoform 2 in most tissues. Isoform 2 is the predominant form in spleen.

It is found in the secreted. Functionally, ligand for tyrosine-protein kinase receptors AXL, TYRO3 and MER whose signaling is implicated in cell growth and survival, cell adhesion and cell migration. GAS6/AXL signaling plays a role in various processes such as endothelial cell survival during acidification by preventing apoptosis, optimal cytokine signaling during human natural killer cell development, hepatic regeneration, gonadotropin-releasing hormone neuron survival and migration, platelet activation, or regulation of thrombotic responses. (Microbial infection) Can bridge virus envelope phosphatidylserine to the TAM receptor tyrosine kinase Axl to mediate viral entry by apoptotic mimicry. Plays a role in Dengue cell entry by apoptotic mimicry. Plays a role in Vaccinia virus cell entry by apoptotic mimicry. Plays a role in ebolavirus and marburgvirus cell entry by apoptotic mimicry. In Homo sapiens (Human), this protein is Growth arrest-specific protein 6.